The following is a 527-amino-acid chain: Berberine bridge enzyme-like 14 (527 aa).

The N-terminal stretch at 1 to 23 (MKSSTTQTLIFTVFLLLIPTSFA) is a signal peptide. Cys35 and Cys96 are joined by a disulfide. Residues Asn47, Asn72, Asn161, Asn296, Asn328, Asn396, and Asn481 are each glycosylated (N-linked (GlcNAc...) asparagine). Positions 74-249 (TTRKPVAIVA…LAWKIKLVPV (176 aa)) constitute an FAD-binding PCMH-type domain. The 6-(S-cysteinyl)-8alpha-(pros-histidyl)-FAD (His-Cys) cross-link spans 111 to 174 (HDYDGMSYLS…NLRGFPAGIC (64 aa)).

The protein belongs to the oxygen-dependent FAD-linked oxidoreductase family. Requires FAD as cofactor. Post-translationally, the FAD cofactor is bound via a bicovalent 6-S-cysteinyl, 8alpha-N1-histidyl FAD linkage.

It localises to the secreted. The protein localises to the cell wall. This is Berberine bridge enzyme-like 14 from Arabidopsis thaliana (Mouse-ear cress).